A 241-amino-acid chain; its full sequence is Phosphatidylcholine synthase (241 aa).

The Cytoplasmic segment spans residues 1-15 (MKFFNYRRVPYAEIR). The chain crosses the membrane as a helical span at residues 16–36 (AFSVHILTASGSFLAFLGVVA). The Periplasmic segment spans residues 37-41 (AAEHR). Residues 42–62 (FVDMFWWLGLALLVDGIDGPI) form a helical membrane-spanning segment. Topologically, residues 63–76 (ARKVQVKEVLPNWS) are cytoplasmic. Residues 77-97 (GDTLDNVIDYVTYVLLPAFAL) traverse the membrane as a helical segment. Residues 98–100 (YQS) are Periplasmic-facing. The chain crosses the membrane as a helical span at residues 101–121 (GMIGEPWSFVAAGAIVVSSAI). Topologically, residues 122-133 (YYADMGMKTDEY) are cytoplasmic. The helical transmembrane segment at 134–154 (FFSGFPVVWNMVVFTLFVIQA) threads the bilayer. Topologically, residues 155–156 (SE) are periplasmic. A helical transmembrane segment spans residues 157 to 177 (VTASIVVFLSVILTFLPINFL). Over 178–187 (HPVRVKRLRP) the chain is Cytoplasmic. The helical transmembrane segment at 188 to 208 (LNLGIFLVWSVLGMYALLLHF) threads the bilayer. Topologically, residues 209–211 (ETP) are periplasmic. Residues 212 to 232 (PWVVVGVVATGLYLYVIGFIL) form a helical membrane-spanning segment. Residues 233 to 241 (QIFPKLGRA) are Cytoplasmic-facing.

Belongs to the CDP-alcohol phosphatidyltransferase class-I family. Requires Mn(2+) as cofactor.

The protein resides in the cell inner membrane. It catalyses the reaction a CDP-1,2-diacyl-sn-glycerol + choline = a 1,2-diacyl-sn-glycero-3-phosphocholine + CMP + H(+). With respect to regulation, activated by CDP-diacylglycerol especially in the presence of Triton X-100 (0.1% w/v) at concentrations where micelles are formed. Maximal activation by Triton X-100 at 0.2% w/v, but higher concentrations become inhibitory. Inhibited by EDTA and high concentrations of choline. Functionally, condenses choline with CDP-diglyceride to produce phosphatidylcholine and CMP. The polypeptide is Phosphatidylcholine synthase (pcs) (Rhizobium meliloti (strain 1021) (Ensifer meliloti)).